The following is a 404-amino-acid chain: Acetate kinase (404 aa).

Asn7 is a binding site for Mg(2+). Position 14 (Lys14) interacts with ATP. Arg95 serves as a coordination point for substrate. Catalysis depends on Asp152, which acts as the Proton donor/acceptor. Residues 212–216 (HLGNG), 286–288 (DMR), and 334–338 (GIGEN) each bind ATP. Glu388 contributes to the Mg(2+) binding site.

The protein belongs to the acetokinase family. Homodimer. The cofactor is Mg(2+). It depends on Mn(2+) as a cofactor.

The protein localises to the cytoplasm. It catalyses the reaction acetate + ATP = acetyl phosphate + ADP. It functions in the pathway metabolic intermediate biosynthesis; acetyl-CoA biosynthesis; acetyl-CoA from acetate: step 1/2. Catalyzes the formation of acetyl phosphate from acetate and ATP. Can also catalyze the reverse reaction. In Lawsonia intracellularis (strain PHE/MN1-00), this protein is Acetate kinase.